A 267-amino-acid polypeptide reads, in one-letter code: Hydroxyethylthiazole kinase 2 (267 aa).

Met41 is a substrate binding site. The ATP site is built by Lys116 and Thr166. A substrate-binding site is contributed by Gly193.

It belongs to the Thz kinase family. It depends on Mg(2+) as a cofactor.

It carries out the reaction 5-(2-hydroxyethyl)-4-methylthiazole + ATP = 4-methyl-5-(2-phosphooxyethyl)-thiazole + ADP + H(+). It participates in cofactor biosynthesis; thiamine diphosphate biosynthesis; 4-methyl-5-(2-phosphoethyl)-thiazole from 5-(2-hydroxyethyl)-4-methylthiazole: step 1/1. In terms of biological role, catalyzes the phosphorylation of the hydroxyl group of 4-methyl-5-beta-hydroxyethylthiazole (THZ). The protein is Hydroxyethylthiazole kinase 2 of Streptococcus pneumoniae (strain Hungary19A-6).